Consider the following 386-residue polypeptide: Probable mannan endo-1,4-beta-mannosidase A (386 aa).

The first 21 residues, 1–21 (MKLNPSLLTAAGLVSAQLASA), serve as a signal peptide directing secretion. Substrate contacts are provided by Trp-95 and Asn-207. Glu-208 (proton donor) is an active-site residue. A substrate-binding site is contributed by Tyr-283. Glu-316 acts as the Nucleophile in catalysis. N-linked (GlcNAc...) asparagine glycosylation is present at Asn-336. Trp-346 contributes to the substrate binding site.

This sequence belongs to the glycosyl hydrolase 5 (cellulase A) family.

Its subcellular location is the secreted. The catalysed reaction is Random hydrolysis of (1-&gt;4)-beta-D-mannosidic linkages in mannans, galactomannans and glucomannans.. In terms of biological role, endo-1,4-mannanase, a crucial enzyme for depolymerization of seed galactomannans and wood galactoglucomannans. The sequence is that of Probable mannan endo-1,4-beta-mannosidase A (manA) from Aspergillus oryzae (strain ATCC 42149 / RIB 40) (Yellow koji mold).